The chain runs to 669 residues: Soluble guanylate cyclase 89Db (669 aa).

H104 contacts heme. Residues 430–458 are a coiled coil; it reads QHCSKLEIMFEKEEQRSDELEKSLELADS. The region spanning 494 to 620 is the Guanylate cyclase domain; the sequence is SVIFIEVMNI…DTVNTASRME (127 aa).

It belongs to the adenylyl cyclase class-4/guanylyl cyclase family. Heterodimer; with Gyc88E, in the presence of magnesium or manganese. Heme is required as a cofactor. Expressed in embryos in a segmental pattern in the ventral nerve cord (VNC) and in the brain, beginning at stage 13 and continuing through to stage 17. Colocalized with Gyc-89Db in several peripheral neurons that innervate trachea, basiconical sensilla and the sensory cones in the posterior segments of the embryo. Expression in wandering 3rd instar larvae is most prominent in a small cluster of cells located in the anterior medial region of each brain lobe. In the VNC, expression is found in scattered cells both laterally and at the midline.

It is found in the cytoplasm. It catalyses the reaction GTP = 3',5'-cyclic GMP + diphosphate. Probably not activated by nitric oxide (NO). Heterodimer exhibits some stimulation, compounds (SIN-1 and two of the NONOates) that were ineffective at stimulating Gyc-88E homodimer did stimulate the heterodimer. Functionally, heterodimers with Gyc88E are activated in response to changing oxygen concentrations, alerting flies to hypoxic environments. Under normal oxygen concentrations, oxygen binds to the heme group and results in low levels of guanylyl cyclase activity. When exposed to reduced oxygen concentrations, the oxygen dissociates from the heme group resulting in activation of the enzyme. The sequence is that of Soluble guanylate cyclase 89Db from Drosophila melanogaster (Fruit fly).